We begin with the raw amino-acid sequence, 572 residues long: Proline--tRNA ligase (572 aa).

This sequence belongs to the class-II aminoacyl-tRNA synthetase family. ProS type 1 subfamily. In terms of assembly, homodimer.

It localises to the cytoplasm. The enzyme catalyses tRNA(Pro) + L-proline + ATP = L-prolyl-tRNA(Pro) + AMP + diphosphate. Functionally, catalyzes the attachment of proline to tRNA(Pro) in a two-step reaction: proline is first activated by ATP to form Pro-AMP and then transferred to the acceptor end of tRNA(Pro). As ProRS can inadvertently accommodate and process non-cognate amino acids such as alanine and cysteine, to avoid such errors it has two additional distinct editing activities against alanine. One activity is designated as 'pretransfer' editing and involves the tRNA(Pro)-independent hydrolysis of activated Ala-AMP. The other activity is designated 'posttransfer' editing and involves deacylation of mischarged Ala-tRNA(Pro). The misacylated Cys-tRNA(Pro) is not edited by ProRS. This is Proline--tRNA ligase from Citrobacter koseri (strain ATCC BAA-895 / CDC 4225-83 / SGSC4696).